A 270-amino-acid polypeptide reads, in one-letter code: UPF0162 protein VC_2176 (270 aa).

This sequence belongs to the UPF0162 family.

This is UPF0162 protein VC_2176 from Vibrio cholerae serotype O1 (strain ATCC 39315 / El Tor Inaba N16961).